The following is a 227-amino-acid chain: Abasic site processing protein YoaM (227 aa).

Cysteine 2 acts as the Nucleophile in catalysis. Cysteine 2 is modified (thiazolidine linkage to a ring-opened DNA abasic site). Glutamate 106 is an active-site residue.

Belongs to the SOS response-associated peptidase family.

With respect to regulation, formation and reversal of DNA-protein cross-link depends on DNA context. Catalyzes formation of the thiazolidine linkage in presence of abasic sites in single-stranded DNA. Mediates the reversal of the thiazolidine cross-link in presence of double stranded DNA. Functionally, sensor of abasic sites in single-stranded DNA (ssDNA) required to preserve genome integrity by promoting error-free repair of abasic sites. Recognizes and binds abasic sites in ssDNA at replication forks and chemically modifies the lesion by forming a covalent cross-link with DNA: forms a stable thiazolidine linkage between a ring-opened abasic site and the alpha-amino and sulfhydryl substituents of its N-terminal catalytic cysteine residue. The DNA-protein cross-link is then reversed: able to catalyze the reversal of the thiazolidine cross-link and cycle between a cross-link and a non-cross-linked state depending on DNA context: mediates self-reversal of the thiazolidine cross-link in double stranded DNA. May act as a protease: mediates autocatalytic processing of its N-terminal methionine in order to expose the catalytic cysteine. In Bacillus subtilis (strain 168), this protein is Abasic site processing protein YoaM (yoaM).